Here is a 257-residue protein sequence, read N- to C-terminus: Small ribosomal subunit protein uS3 (257 aa).

Positions 40-110 (IRKYLSTKYK…LVSLKVVEVQ (71 aa)) constitute a KH type-2 domain. Residues 223-257 (ANKEFSRSSKPKKGSFNRSSRSKNTKPAPKQAVSE) form a disordered region. The span at 231 to 246 (SKPKKGSFNRSSRSKN) shows a compositional bias: basic residues.

The protein belongs to the universal ribosomal protein uS3 family. In terms of assembly, part of the 30S ribosomal subunit. Forms a tight complex with proteins S10 and S14.

Its function is as follows. Binds the lower part of the 30S subunit head. Binds mRNA in the 70S ribosome, positioning it for translation. This chain is Small ribosomal subunit protein uS3, found in Ureaplasma parvum serovar 3 (strain ATCC 27815 / 27 / NCTC 11736).